A 453-amino-acid chain; its full sequence is GTPase Der (453 aa).

EngA-type G domains follow at residues 4 to 169 and 177 to 352; these read PIVA…PPTT and IKIA…EEHK. GTP-binding positions include 10-17, 57-61, 120-123, 183-190, 230-234, and 295-298; these read GRPNVGKS, DTGGL, NKCE, DTAGI, and NKWD. The 86-residue stretch at 353–438 folds into the KH-like domain; it reads RRVSTSVINE…PIRLLWRSKK (86 aa).

It belongs to the TRAFAC class TrmE-Era-EngA-EngB-Septin-like GTPase superfamily. EngA (Der) GTPase family. In terms of assembly, associates with the 50S ribosomal subunit.

Its function is as follows. GTPase that plays an essential role in the late steps of ribosome biogenesis. The protein is GTPase Der of Trichormus variabilis (strain ATCC 29413 / PCC 7937) (Anabaena variabilis).